The following is a 425-amino-acid chain: Dihydroorotase (425 aa).

Residues His56 and His58 each contribute to the Zn(2+) site. Residues 58–60 (HYR) and Asn90 each bind substrate. Asp148, His175, and His228 together coordinate Zn(2+). Residue Asn274 participates in substrate binding. Asp301 lines the Zn(2+) pocket. Asp301 is a catalytic residue. Substrate contacts are provided by residues His305 and 319-320 (FG).

The protein belongs to the metallo-dependent hydrolases superfamily. DHOase family. Class I DHOase subfamily. Requires Zn(2+) as cofactor.

The catalysed reaction is (S)-dihydroorotate + H2O = N-carbamoyl-L-aspartate + H(+). Its pathway is pyrimidine metabolism; UMP biosynthesis via de novo pathway; (S)-dihydroorotate from bicarbonate: step 3/3. Functionally, catalyzes the reversible cyclization of carbamoyl aspartate to dihydroorotate. This is Dihydroorotase from Lactobacillus delbrueckii subsp. bulgaricus (strain ATCC 11842 / DSM 20081 / BCRC 10696 / JCM 1002 / NBRC 13953 / NCIMB 11778 / NCTC 12712 / WDCM 00102 / Lb 14).